A 210-amino-acid polypeptide reads, in one-letter code: BAG family molecular chaperone regulator 2 (210 aa).

Residue Ala2 is modified to N-acetylalanine. A phosphoserine mark is found at Ser20, Ser31, and Ser73. The stretch at 20–60 (SMADRSSRLLESLDQLELRVEALRDAATAVEQEKEILLEMI) forms a coiled coil. In terms of domain architecture, BAG spans 109 to 189 (SLKHATRIID…NIDNSDKAIK (81 aa)).

In terms of assembly, binds to the ATPase domain of HSP/HSC70 chaperones. May interact with NWD1. Interacts with HSPA1A (via NBD), HSPA1B (via NBD) and HSPA8. May interact with DNJC9; the interaction seems to be histone-dependent.

In terms of biological role, co-chaperone for HSP70 and HSC70 chaperone proteins. Acts as a nucleotide-exchange factor (NEF) promoting the release of ADP from the HSP70 and HSC70 proteins thereby triggering client/substrate protein release. This Mus musculus (Mouse) protein is BAG family molecular chaperone regulator 2 (Bag2).